The sequence spans 187 residues: Translation machinery-associated protein 22 (187 aa).

One can recognise an SUI1 domain in the interval 94–165 (VTIKRIERNK…EIEEFILEKY (72 aa)).

It belongs to the DENR family. Interacts with the 40S ribosomal subunit.

The protein resides in the cytoplasm. This chain is Translation machinery-associated protein 22 (tma-22), found in Neurospora crassa (strain ATCC 24698 / 74-OR23-1A / CBS 708.71 / DSM 1257 / FGSC 987).